The sequence spans 188 residues: Acireductone dioxygenase (188 aa).

Fe(2+) is bound by residues histidine 97, histidine 99, glutamate 103, and histidine 141. Residues histidine 97, histidine 99, glutamate 103, and histidine 141 each coordinate Ni(2+).

The protein belongs to the acireductone dioxygenase (ARD) family. As to quaternary structure, monomer. Requires Fe(2+) as cofactor. It depends on Ni(2+) as a cofactor.

The enzyme catalyses 1,2-dihydroxy-5-(methylsulfanyl)pent-1-en-3-one + O2 = 3-(methylsulfanyl)propanoate + CO + formate + 2 H(+). It catalyses the reaction 1,2-dihydroxy-5-(methylsulfanyl)pent-1-en-3-one + O2 = 4-methylsulfanyl-2-oxobutanoate + formate + 2 H(+). Its pathway is amino-acid biosynthesis; L-methionine biosynthesis via salvage pathway; L-methionine from S-methyl-5-thio-alpha-D-ribose 1-phosphate: step 5/6. Functionally, catalyzes 2 different reactions between oxygen and the acireductone 1,2-dihydroxy-3-keto-5-methylthiopentene (DHK-MTPene) depending upon the metal bound in the active site. Fe-containing acireductone dioxygenase (Fe-ARD) produces formate and 2-keto-4-methylthiobutyrate (KMTB), the alpha-ketoacid precursor of methionine in the methionine recycle pathway. Ni-containing acireductone dioxygenase (Ni-ARD) produces methylthiopropionate, carbon monoxide and formate, and does not lie on the methionine recycle pathway. The protein is Acireductone dioxygenase of Xanthomonas euvesicatoria pv. vesicatoria (strain 85-10) (Xanthomonas campestris pv. vesicatoria).